The primary structure comprises 295 residues: Pyridoxal 5'-phosphate synthase subunit PdxS (295 aa).

Asp25 serves as a coordination point for D-ribose 5-phosphate. The active-site Schiff-base intermediate with D-ribose 5-phosphate is Lys82. Gly154 contacts D-ribose 5-phosphate. Arg166 provides a ligand contact to D-glyceraldehyde 3-phosphate. D-ribose 5-phosphate-binding positions include Gly215 and 236 to 237 (GS).

The protein belongs to the PdxS/SNZ family. As to quaternary structure, in the presence of PdxT, forms a dodecamer of heterodimers.

It catalyses the reaction aldehydo-D-ribose 5-phosphate + D-glyceraldehyde 3-phosphate + L-glutamine = pyridoxal 5'-phosphate + L-glutamate + phosphate + 3 H2O + H(+). Its pathway is cofactor biosynthesis; pyridoxal 5'-phosphate biosynthesis. Functionally, catalyzes the formation of pyridoxal 5'-phosphate from ribose 5-phosphate (RBP), glyceraldehyde 3-phosphate (G3P) and ammonia. The ammonia is provided by the PdxT subunit. Can also use ribulose 5-phosphate and dihydroxyacetone phosphate as substrates, resulting from enzyme-catalyzed isomerization of RBP and G3P, respectively. In Actinobacillus pleuropneumoniae serotype 3 (strain JL03), this protein is Pyridoxal 5'-phosphate synthase subunit PdxS.